Consider the following 574-residue polypeptide: Septation ring formation regulator EzrA (574 aa).

Residues 1–7 (MSSGIIL) are Extracellular-facing. Residues 8 to 26 (LIVAIVLLVIIAYLVGVII) traverse the membrane as a helical segment. The Cytoplasmic segment spans residues 27-574 (RKRNDTLITS…YEKTRERIRF (548 aa)). Coiled coils occupy residues 102 to 131 (NFIR…REAL), 161 to 190 (ENED…FVAL), 276 to 379 (VTLD…QQEK), and 459 to 493 (QLEA…NLEE).

It belongs to the EzrA family.

The protein resides in the cell membrane. Its function is as follows. Negative regulator of FtsZ ring formation; modulates the frequency and position of FtsZ ring formation. Inhibits FtsZ ring formation at polar sites. Interacts either with FtsZ or with one of its binding partners to promote depolymerization. The polypeptide is Septation ring formation regulator EzrA (Streptococcus equi subsp. zooepidemicus (strain H70)).